The sequence spans 59 residues: Large ribosomal subunit protein uL30 (59 aa).

It belongs to the universal ribosomal protein uL30 family. As to quaternary structure, part of the 50S ribosomal subunit.

The protein is Large ribosomal subunit protein uL30 of Shewanella amazonensis (strain ATCC BAA-1098 / SB2B).